A 478-amino-acid polypeptide reads, in one-letter code: ATP-dependent RNA helicase DDX19A (478 aa).

Ala2 carries the post-translational modification N-acetylalanine. The tract at residues Ala2–Glu299 is N-terminal lobe. A Glycyl lysine isopeptide (Lys-Gly) (interchain with G-Cter in SUMO1); alternate cross-link involves residue Lys26. Residue Lys26 forms a Glycyl lysine isopeptide (Lys-Gly) (interchain with G-Cter in SUMO2); alternate linkage. Phosphothreonine is present on Thr42. Residues Asp54–Ser67 are N-terminal helix. The Q motif motif lies at Lys91–Glu119. Residues Gln118 and Ser137 to Thr144 each bind ATP. A Helicase ATP-binding domain is found at Met124 to Ile294. The DEAD box motif lies at Asp241 to Asp244. Residues Glu300–Asn478 are C-terminal lobe. Positions Thr305–Ile473 constitute a Helicase C-terminal domain. 2 residues coordinate ATP: Arg428 and Arg431.

This sequence belongs to the DEAD box helicase family. DDX19/DBP5 subfamily.

Its subcellular location is the cytoplasm. It localises to the nucleus. It is found in the nucleoplasm. It carries out the reaction ATP + H2O = ADP + phosphate + H(+). ATP-dependent RNA helicase involved in mRNA export from the nucleus. Rather than unwinding RNA duplexes, DDX19 functions as a remodeler of ribonucleoprotein particles, whereby proteins bound to nuclear mRNA are dissociated and replaced by cytoplasmic mRNA binding proteins. The sequence is that of ATP-dependent RNA helicase DDX19A (DDX19A) from Homo sapiens (Human).